We begin with the raw amino-acid sequence, 125 residues long: Small ribosomal subunit protein bS6 (125 aa).

Belongs to the bacterial ribosomal protein bS6 family.

Binds together with bS18 to 16S ribosomal RNA. This is Small ribosomal subunit protein bS6 from Campylobacter jejuni (strain RM1221).